Reading from the N-terminus, the 372-residue chain is Mitogen-activated protein kinase spk1 (372 aa).

The span at 1–25 (MASATSTPTIADGNSNKESVATSRS) shows a compositional bias: polar residues. A disordered region spans residues 1-29 (MASATSTPTIADGNSNKESVATSRSPHTH). In terms of domain architecture, Protein kinase spans 39–327 (YEMINLIGQG…AEEALKHPYV (289 aa)). Residues 45 to 53 (IGQGAYGVV) and K68 contribute to the ATP site. Catalysis depends on D163, which acts as the Proton acceptor. The residue at position 199 (T199) is a Phosphothreonine. A TXY motif is present at residues 199-201 (TEY). At Y201 the chain carries Phosphotyrosine.

Belongs to the protein kinase superfamily. CMGC Ser/Thr protein kinase family. MAP kinase subfamily. Mg(2+) serves as cofactor. In terms of processing, dually phosphorylated on Thr-199 and Tyr-201, which activates the enzyme.

The protein localises to the nucleus. The catalysed reaction is L-seryl-[protein] + ATP = O-phospho-L-seryl-[protein] + ADP + H(+). It catalyses the reaction L-threonyl-[protein] + ATP = O-phospho-L-threonyl-[protein] + ADP + H(+). Activated by tyrosine and threonine phosphorylation. Involved in mating signal transduction pathway. The chain is Mitogen-activated protein kinase spk1 (spk1) from Schizosaccharomyces pombe (strain 972 / ATCC 24843) (Fission yeast).